A 161-amino-acid polypeptide reads, in one-letter code: Allophycocyanin beta chain (161 aa).

Residue Asn-71 is modified to N4-methylasparagine. Position 81 (Cys-81) interacts with (2R,3E)-phycocyanobilin.

The protein belongs to the phycobiliprotein family. As to quaternary structure, heterodimer of an alpha and a beta chain. Contains one covalently linked phycocyanobilin chromophore.

The protein localises to the cellular thylakoid membrane. In terms of biological role, light-harvesting photosynthetic bile pigment-protein from the phycobiliprotein complex. Allophycocyanin has a maximum absorption at approximately 650 nanometers. The chain is Allophycocyanin beta chain (apcB) from Arthrospira platensis (Spirulina platensis).